Consider the following 347-residue polypeptide: S-adenosylmethionine:tRNA ribosyltransferase-isomerase (347 aa).

The protein belongs to the QueA family. Monomer.

It is found in the cytoplasm. It catalyses the reaction 7-aminomethyl-7-carbaguanosine(34) in tRNA + S-adenosyl-L-methionine = epoxyqueuosine(34) in tRNA + adenine + L-methionine + 2 H(+). It functions in the pathway tRNA modification; tRNA-queuosine biosynthesis. In terms of biological role, transfers and isomerizes the ribose moiety from AdoMet to the 7-aminomethyl group of 7-deazaguanine (preQ1-tRNA) to give epoxyqueuosine (oQ-tRNA). In Xylella fastidiosa (strain M23), this protein is S-adenosylmethionine:tRNA ribosyltransferase-isomerase.